The sequence spans 590 residues: G protein-coupled receptor kinase 5 (590 aa).

The N-terminal stretch occupies residues 1–185 (MELENIVANT…LERQPVTKNT (185 aa)). Residues 20–39 (GGKRKGKSKKWKEILKFPHI) are interaction with calmodulin. The RGS domain occupies 53-171 (YCSLCDKQPI…LDSMFFDRFL (119 aa)). A Protein kinase domain is found at 186–448 (FRQYRVLGKG…AAEVKRHPFF (263 aa)). ATP-binding positions include 192–200 (LGKGGFGEV) and K215. D311 functions as the Proton acceptor in the catalytic mechanism. Positions 388 to 395 (RKEKVKRE) match the Nuclear localization signal motif. Residues 449–514 (RNMNFKRLEA…GSVSIPWQNE (66 aa)) enclose the AGC-kinase C-terminal domain. Residue S484 is modified to Phosphoserine; by autocatalysis. Position 485 is a phosphothreonine; by autocatalysis (T485). Positions 531–590 (GTLPPDLNRNHPPEPPKKGLLQRLFKRQHQNNSKSSPSSKTSFNHHINSNHVSSNSTGSS) are disordered. Positions 538-547 (NRNHPPEPPK) are enriched in basic and acidic residues. Positions 546–565 (PKKGLLQRLFKRQHQNNSKS) are sufficient for membrane localization. The span at 563-590 (SKSSPSSKTSFNHHINSNHVSSNSTGSS) shows a compositional bias: low complexity. Position 579 is a phosphoserine (S579).

This sequence belongs to the protein kinase superfamily. AGC Ser/Thr protein kinase family. GPRK subfamily. In terms of assembly, interacts with ST13 (via the C-terminus 303-319 AA). Interacts with TP53/p53. Interacts with HTR4 (via C-terminus 330-346 AA); this interaction is promoted by 5-HT (serotonin). Interacts with HDAC5. Interacts with GIT1. Autophosphorylated. Autophosphorylation may play a critical role in the regulation of GRK5 kinase activity. As to expression, highest levels in heart, placenta, lung &gt; skeletal muscle &gt; brain, liver, pancreas &gt; kidney.

It localises to the cytoplasm. Its subcellular location is the nucleus. The protein resides in the cell membrane. It carries out the reaction [G-protein-coupled receptor] + ATP = [G-protein-coupled receptor]-phosphate + ADP + H(+). Its activity is regulated as follows. Inhibited by calmodulin with an IC(50) of 50 nM. Calmodulin inhibits GRK5 association with receptor and phospholipid. Serine/threonine kinase that phosphorylates preferentially the activated forms of a variety of G-protein-coupled receptors (GPCRs). Such receptor phosphorylation initiates beta-arrestin-mediated receptor desensitization, internalization, and signaling events leading to their down-regulation. Phosphorylates a variety of GPCRs, including adrenergic receptors, muscarinic acetylcholine receptors (more specifically Gi-coupled M2/M4 subtypes), dopamine receptors and opioid receptors. In addition to GPCRs, also phosphorylates various substrates: Hsc70-interacting protein/ST13, TP53/p53, HDAC5, and arrestin-1/ARRB1. Phosphorylation of ARRB1 by GRK5 inhibits G-protein independent MAPK1/MAPK3 signaling downstream of 5HT4-receptors. Phosphorylation of HDAC5, a repressor of myocyte enhancer factor 2 (MEF2) leading to nuclear export of HDAC5 and allowing MEF2-mediated transcription. Phosphorylation of TP53/p53, a crucial tumor suppressor, inhibits TP53/p53-mediated apoptosis. Phosphorylation of ST13 regulates internalization of the chemokine receptor. Phosphorylates rhodopsin (RHO) (in vitro) and a non G-protein-coupled receptor, LRP6 during Wnt signaling (in vitro). The sequence is that of G protein-coupled receptor kinase 5 (GRK5) from Homo sapiens (Human).